The sequence spans 167 residues: Fluoride-specific ion channel FluC (167 aa).

4 helical membrane-spanning segments follow: residues 32–52 (HVTP…GALA), 69–89 (IGTL…IAYV), 102–122 (FMIT…AELF), and 137–157 (LGLH…TIGL). Residues G109 and S112 each coordinate Na(+).

It belongs to the fluoride channel Fluc/FEX (TC 1.A.43) family.

The protein resides in the cell inner membrane. The enzyme catalyses fluoride(in) = fluoride(out). With respect to regulation, na(+) is not transported, but it plays an essential structural role and its presence is essential for fluoride channel function. Functionally, fluoride-specific ion channel. Important for reducing fluoride concentration in the cell, thus reducing its toxicity. The sequence is that of Fluoride-specific ion channel FluC from Xanthomonas oryzae pv. oryzae (strain KACC10331 / KXO85).